The following is a 745-amino-acid chain: Cellulose synthase-like protein E2 (745 aa).

The span at 1–14 (MAGSGGGVVSGGRQ) shows a compositional bias: gly residues. Positions 1 to 20 (MAGSGGGVVSGGRQRGPPLF) are disordered. The next 2 membrane-spanning stretches (helical) occupy residues 29–49 (AMAA…LIWL) and 66–86 (WAWL…VLTL). Catalysis depends on residues aspartate 155 and aspartate 458. Transmembrane regions (helical) follow at residues 541–561 (FPTL…ISLF), 568–588 (WFIP…AESL), 658–678 (AMFV…VLGI), 686–706 (GPGG…IVAI), and 723–743 (LPAS…ILSI).

This sequence belongs to the glycosyltransferase 2 family. Plant cellulose synthase-like E subfamily.

The protein resides in the golgi apparatus membrane. Thought to be a Golgi-localized beta-glycan synthase that polymerize the backbones of noncellulosic polysaccharides (hemicelluloses) of plant cell wall. The sequence is that of Cellulose synthase-like protein E2 (CSLE2) from Oryza sativa subsp. japonica (Rice).